A 651-amino-acid polypeptide reads, in one-letter code: DNA mismatch repair protein MutL (651 aa).

The interval 336–398 is disordered; sequence RLDMTEPETG…ANSGYQPENP (63 aa). Positions 385–394 are enriched in polar residues; it reads ARESANSGYQ.

It belongs to the DNA mismatch repair MutL/HexB family.

This protein is involved in the repair of mismatches in DNA. It is required for dam-dependent methyl-directed DNA mismatch repair. May act as a 'molecular matchmaker', a protein that promotes the formation of a stable complex between two or more DNA-binding proteins in an ATP-dependent manner without itself being part of a final effector complex. This chain is DNA mismatch repair protein MutL, found in Pectobacterium atrosepticum (strain SCRI 1043 / ATCC BAA-672) (Erwinia carotovora subsp. atroseptica).